We begin with the raw amino-acid sequence, 337 residues long: UDP-glucose 4-epimerase (337 aa).

Residues 11 to 12, 31 to 36, 58 to 59, 80 to 84, Asn-99, Ser-124, Tyr-149, Lys-153, and Phe-178 each bind NAD(+); these read YI, DNLSNA, DL, and FAGLK. Positions 124 and 149 each coordinate substrate. Tyr-149 functions as the Proton acceptor in the catalytic mechanism. Substrate-binding positions include Asn-179, 199 to 200, 216 to 218, Arg-231, and 292 to 295; these read NL, GIF, and RDGD.

It belongs to the NAD(P)-dependent epimerase/dehydratase family. Homodimer. The cofactor is NAD(+).

It catalyses the reaction UDP-alpha-D-glucose = UDP-alpha-D-galactose. The protein operates within carbohydrate metabolism; galactose metabolism. Its function is as follows. Involved in the metabolism of galactose. Catalyzes the conversion of UDP-galactose (UDP-Gal) to UDP-glucose (UDP-Glc) through a mechanism involving the transient reduction of NAD. The sequence is that of UDP-glucose 4-epimerase (galE) from Erwinia amylovora (Fire blight bacteria).